We begin with the raw amino-acid sequence, 77 residues long: Cold shock protein YdfK (77 aa).

This sequence to E.coli YnaE.

The protein is Cold shock protein YdfK (ydfK) of Escherichia coli (strain K12).